The chain runs to 394 residues: MKDYTYSVTEINEYIKDLIEGDPYLTNVSVYGEISGVRPRKGHIFFSLVEENARLECVIFGGDNMGIRLQEGRMALVEGSVSVYIPHGTYRFICSNVRYLDQAGMYQIKFETTLKKLLEEGLLSRPKKTVPRFPRKIGIITSRDSAALQDVIRTARERKAPIEIYVFHTSVQGDSAREELIKALRKANEYDLDLVMIVRGGGSKEDLWGFNEEDVIREILKLRHPVVTGIGHEIDRVIADFVADVSMHTPTGAAEYVIPDASEIHEDLDSFLEKLIASLSNRFDMEERRLETLYFRLRMIGRRKLELNEFKIERVKELAAKLRKKLMDCFEQDQEKLESLGRMLESLNPLRPLERGFVLVKKEGEIVKESSDLKRGDVVSLVFKDGTKKAQVIG.

The protein belongs to the XseA family. In terms of assembly, heterooligomer composed of large and small subunits.

The protein resides in the cytoplasm. The catalysed reaction is Exonucleolytic cleavage in either 5'- to 3'- or 3'- to 5'-direction to yield nucleoside 5'-phosphates.. Functionally, bidirectionally degrades single-stranded DNA into large acid-insoluble oligonucleotides, which are then degraded further into small acid-soluble oligonucleotides. This Thermotoga sp. (strain RQ2) protein is Exodeoxyribonuclease 7 large subunit.